The following is a 252-amino-acid chain: tRNA (guanine-N(1)-)-methyltransferase (252 aa).

Residues Gly-113 and 133-138 (IGDYVL) each bind S-adenosyl-L-methionine.

This sequence belongs to the RNA methyltransferase TrmD family. As to quaternary structure, homodimer.

The protein localises to the cytoplasm. The enzyme catalyses guanosine(37) in tRNA + S-adenosyl-L-methionine = N(1)-methylguanosine(37) in tRNA + S-adenosyl-L-homocysteine + H(+). Functionally, specifically methylates guanosine-37 in various tRNAs. This Baumannia cicadellinicola subsp. Homalodisca coagulata protein is tRNA (guanine-N(1)-)-methyltransferase.